The following is a 383-amino-acid chain: Trichodiene synthase (383 aa).

Belongs to the trichodiene synthase family.

It catalyses the reaction (2E,6E)-farnesyl diphosphate = trichodiene + diphosphate. Its pathway is sesquiterpene biosynthesis; trichothecene biosynthesis. TS is a member of the terpene cyclase group of enzymes. It catalyzes the isomerization and cyclization of farnesyl pyro-phosphate to form trichodiene, the first cyclic intermediate in the biosynthetic pathway for trichothecenes. It serves to branch trichothecene biosynthesis from the isoprenoid pathway. This Stachybotrys chartarum (Toxic black mold) protein is Trichodiene synthase (TRI5).